We begin with the raw amino-acid sequence, 656 residues long: Phosphoprotein 85 (656 aa).

2 disordered regions span residues 1–174 (MSSR…EGDE) and 615–656 (NGNH…EYCC). Positions 46 to 55 (SATEDLDRME) are enriched in basic and acidic residues. Low complexity-rich tracts occupy residues 59–70 (SPYSVSSDAPSS) and 140–160 (DNSS…RSTS). Residues 625–634 (SPPPPLPPRD) are compositionally biased toward pro residues. The span at 635-656 (YPQRDERDRHRRDRRDSGEYCC) shows a compositional bias: basic and acidic residues.

This sequence belongs to the herpesviridae pp85 family. Post-translationally, phosphorylated.

The protein resides in the virion tegument. The protein localises to the host cytoplasm. The polypeptide is Phosphoprotein 85 (UL25) (Homo sapiens (Human)).